A 214-amino-acid chain; its full sequence is Adenylate kinase (214 aa).

ATP is bound at residue Gly10–Thr15. An NMP region spans residues Ser30–Val59. Residues Thr31, Arg36, Gln57–Val59, Gly85–Arg88, and Gln92 each bind AMP. Residues Gly122–Asp159 are LID. ATP is bound by residues Arg123 and Thr132–Tyr133. Arg156 and Arg167 together coordinate AMP. ATP is bound at residue Gln200.

This sequence belongs to the adenylate kinase family. In terms of assembly, monomer.

It localises to the cytoplasm. It carries out the reaction AMP + ATP = 2 ADP. It functions in the pathway purine metabolism; AMP biosynthesis via salvage pathway; AMP from ADP: step 1/1. Functionally, catalyzes the reversible transfer of the terminal phosphate group between ATP and AMP. Plays an important role in cellular energy homeostasis and in adenine nucleotide metabolism. This is Adenylate kinase from Histophilus somni (strain 129Pt) (Haemophilus somnus).